Here is a 423-residue protein sequence, read N- to C-terminus: AP-1 complex subunit mu-1 (423 aa).

Ser2 bears the N-acetylserine mark. Residues Thr152, Thr154, and Thr223 each carry the phosphothreonine modification. Residues 168–421 (KNEVFLDVIE…ITQNGDYQLR (254 aa)) enclose the MHD domain.

The protein belongs to the adaptor complexes medium subunit family. Adaptor protein complex 1 (AP-1) is a heterotetramer composed of two large adaptins (gamma-type subunit AP1G1 and beta-type subunit AP1B1), a medium adaptin (mu-type subunit AP1M1 or AP1M2) and a small adaptin (sigma-type subunit AP1S1 or AP1S2 or AP1S3). Interacts with MARCHF11. In terms of processing, phosphorylation of membrane-bound AP1M1/AP1M2 increases its affinity for sorting signals.

Its subcellular location is the golgi apparatus. It is found in the cytoplasmic vesicle. The protein resides in the clathrin-coated vesicle membrane. Subunit of clathrin-associated adaptor protein complex 1 that plays a role in protein sorting in the trans-Golgi network (TGN) and endosomes. The AP complexes mediate the recruitment of clathrin to membranes and the recognition of sorting signals within the cytosolic tails of transmembrane cargo molecules. The sequence is that of AP-1 complex subunit mu-1 (Ap1m1) from Mus musculus (Mouse).